A 280-amino-acid polypeptide reads, in one-letter code: Fructose-1,6-bisphosphatase class 1 (280 aa).

Mg(2+) is bound by residues Glu64, Asp83, Leu85, and Asp86. Residues Asp86 to Ser89, Tyr189, and Lys220 each bind substrate. Glu226 provides a ligand contact to Mg(2+).

This sequence belongs to the FBPase class 1 family. As to quaternary structure, homotetramer. It depends on Mg(2+) as a cofactor.

The protein localises to the cytoplasm. The enzyme catalyses beta-D-fructose 1,6-bisphosphate + H2O = beta-D-fructose 6-phosphate + phosphate. It participates in carbohydrate biosynthesis; gluconeogenesis. The polypeptide is Fructose-1,6-bisphosphatase class 1 (Campylobacter jejuni subsp. jejuni serotype O:6 (strain 81116 / NCTC 11828)).